The chain runs to 104 residues: Large ribosomal subunit protein uL24 (104 aa).

Belongs to the universal ribosomal protein uL24 family. As to quaternary structure, part of the 50S ribosomal subunit.

Functionally, one of two assembly initiator proteins, it binds directly to the 5'-end of the 23S rRNA, where it nucleates assembly of the 50S subunit. One of the proteins that surrounds the polypeptide exit tunnel on the outside of the subunit. The protein is Large ribosomal subunit protein uL24 of Salmonella paratyphi A (strain ATCC 9150 / SARB42).